The sequence spans 1081 residues: FHF complex subunit HOOK-interacting protein 1A (1081 aa).

4 disordered regions span residues serine 474–alanine 496, proline 544–lysine 623, glutamate 658–proline 770, and glutamate 863–valine 883. The span at proline 486–alanine 496 shows a compositional bias: pro residues. Over residues glutamate 553–alanine 564 the composition is skewed to basic and acidic residues. A compositionally biased stretch (polar residues) spans proline 567 to glutamine 576. The segment covering glutamate 680–alanine 707 has biased composition (acidic residues). Polar residues-rich tracts occupy residues glutamate 727–leucine 738 and glutamate 746–serine 762.

Belongs to the FHIP family. In terms of assembly, may be a component of the FTS/Hook/FHIP complex (FHF complex), composed of AKTIP/FTS, FHIP1B, and one or more members of the Hook family of proteins HOOK1, HOOK2, and HOOK3. May interact directly with AKTIP/FTS.

Functionally, probable component of the FTS/Hook/FHIP complex (FHF complex). FHF complex promotes the distribution of AP-4 complex to the perinuclear area of the cell. The polypeptide is FHF complex subunit HOOK-interacting protein 1A (Mus musculus (Mouse)).